Reading from the N-terminus, the 108-residue chain is Long neurotoxin 13 (108 aa).

Residues 1–21 (MKTLLLTLVVVTIVCLDLAYT) form the signal peptide. 5 disulfide bridges follow: C24–C42, C35–C63, C48–C52, C67–C78, and C79–C84.

This sequence belongs to the three-finger toxin family. Long-chain subfamily. Type II alpha-neurotoxin sub-subfamily. In terms of tissue distribution, expressed by the venom gland.

It localises to the secreted. Its function is as follows. Binds with high affinity to muscular (alpha-1/CHRNA1) and neuronal (alpha-7/CHRNA7) nicotinic acetylcholine receptor (nAChR) and inhibits acetylcholine from binding to the receptor, thereby impairing neuromuscular and neuronal transmission. The protein is Long neurotoxin 13 of Drysdalia coronoides (White-lipped snake).